Reading from the N-terminus, the 258-residue chain is Small ribosomal subunit protein mS23 (258 aa).

Residues 230-239 (KKNSTKQSWA) show a composition bias toward polar residues. Residues 230 to 258 (KKNSTKQSWAEATEEKEEQDSAEPEELKL) form a disordered region. The segment covering 241–258 (ATEEKEEQDSAEPEELKL) has biased composition (acidic residues).

It belongs to the mitochondrion-specific ribosomal protein mS23 family. As to quaternary structure, component of the mitochondrial small ribosomal subunit.

The protein resides in the mitochondrion. In Eremothecium gossypii (strain ATCC 10895 / CBS 109.51 / FGSC 9923 / NRRL Y-1056) (Yeast), this protein is Small ribosomal subunit protein mS23 (RSM25).